Here is a 330-residue protein sequence, read N- to C-terminus: Fructose-1,6-bisphosphatase class 1 (330 aa).

Residues glutamate 84, aspartate 103, leucine 105, and aspartate 106 each coordinate Mg(2+). Substrate-binding positions include 106 to 109, asparagine 196, and lysine 262; that span reads DGSS. Residue glutamate 268 participates in Mg(2+) binding.

Belongs to the FBPase class 1 family. Homotetramer. The cofactor is Mg(2+).

Its subcellular location is the cytoplasm. It catalyses the reaction beta-D-fructose 1,6-bisphosphate + H2O = beta-D-fructose 6-phosphate + phosphate. It participates in carbohydrate biosynthesis; gluconeogenesis. In Shewanella frigidimarina (strain NCIMB 400), this protein is Fructose-1,6-bisphosphatase class 1.